A 165-amino-acid polypeptide reads, in one-letter code: Small ribosomal subunit protein uS5 (165 aa).

Residues 10 to 73 (LKEKVVFINR…EDAKKHLVEV (64 aa)) form the S5 DRBM domain.

It belongs to the universal ribosomal protein uS5 family. In terms of assembly, part of the 30S ribosomal subunit. Contacts proteins S4 and S8.

In terms of biological role, with S4 and S12 plays an important role in translational accuracy. Functionally, located at the back of the 30S subunit body where it stabilizes the conformation of the head with respect to the body. In Clostridium novyi (strain NT), this protein is Small ribosomal subunit protein uS5.